The primary structure comprises 116 residues: Ribonuclease P protein component (116 aa).

It belongs to the RnpA family. In terms of assembly, consists of a catalytic RNA component (M1 or rnpB) and a protein subunit.

It carries out the reaction Endonucleolytic cleavage of RNA, removing 5'-extranucleotides from tRNA precursor.. Functionally, RNaseP catalyzes the removal of the 5'-leader sequence from pre-tRNA to produce the mature 5'-terminus. It can also cleave other RNA substrates such as 4.5S RNA. The protein component plays an auxiliary but essential role in vivo by binding to the 5'-leader sequence and broadening the substrate specificity of the ribozyme. This chain is Ribonuclease P protein component, found in Acholeplasma laidlawii (strain PG-8A).